A 396-amino-acid chain; its full sequence is Tryptophan synthase beta chain (396 aa).

N6-(pyridoxal phosphate)lysine is present on K88.

The protein belongs to the TrpB family. In terms of assembly, tetramer of two alpha and two beta chains. Pyridoxal 5'-phosphate is required as a cofactor.

It catalyses the reaction (1S,2R)-1-C-(indol-3-yl)glycerol 3-phosphate + L-serine = D-glyceraldehyde 3-phosphate + L-tryptophan + H2O. It functions in the pathway amino-acid biosynthesis; L-tryptophan biosynthesis; L-tryptophan from chorismate: step 5/5. Its function is as follows. The beta subunit is responsible for the synthesis of L-tryptophan from indole and L-serine. The chain is Tryptophan synthase beta chain from Leptospira biflexa serovar Patoc (strain Patoc 1 / Ames).